The sequence spans 347 residues: Calcium homeostasis modulator protein 3 (347 aa).

At 1 to 20 (MDRFRMLFQHLQSSSESVMN) the chain is on the cytoplasmic side. The tract at residues 9-36 (QHLQSSSESVMNGICLLLAAVTVKIYSS) is central pore. A helical transmembrane segment spans residues 21 to 36 (GICLLLAAVTVKIYSS). Topologically, residues 37 to 48 (LDFNCPCLERYN) are extracellular. Intrachain disulfides connect C41–C126 and C43–C157. The helical transmembrane segment at 49–71 (ALYGLGLLLTPPLALFLCGLLVN) threads the bilayer. The Cytoplasmic portion of the chain corresponds to 72-98 (RQSVLMVEEWRRPAGHRRKDLGIIRYM). A lipid anchor (S-palmitoyl cysteine) is attached at C99. Residues 99–124 (CSSVLQRALAAPLVWILLALLDGKCF) form a helical membrane-spanning segment. Residues 125–176 (VCAFSNSVDPEKFLDFANMTPRQVQLFLAKVPCKEDELVKNSPARKAVSRYL) lie on the Extracellular side of the membrane. N142 is a glycosylation site (N-linked (GlcNAc...) asparagine). A helical membrane pass occupies residues 177–202 (RCLSQAIGWSITLLVIVVAFLARCLR). S-palmitoyl cysteine attachment occurs at residues C200 and C204. Residues 203 to 347 (PCFDQTVFLQ…GTKLCHQLNV (145 aa)) are Cytoplasmic-facing. Residues 265–290 (GGIPESQESSEPPELREDRDSGNGKA) are disordered. Residues 277 to 286 (PELREDRDSG) show a composition bias toward basic and acidic residues.

The protein belongs to the CALHM family. In terms of assembly, associates with CALHM1 as a pore-forming subunit in a hetero-hexameric channel complex. In terms of processing, N-glycosylated. Post-translationally, palmitoylated by ZDHHC3 and ZDHHC15. Palmitoylation positively regulates CALHM1:CALHM3 channel conductance. In terms of tissue distribution, expressed in taste bud cells.

Its subcellular location is the basolateral cell membrane. It catalyses the reaction ATP(in) = ATP(out). The enzyme catalyses Ca(2+)(in) = Ca(2+)(out). The catalysed reaction is Na(+)(in) = Na(+)(out). It carries out the reaction K(+)(in) = K(+)(out). It catalyses the reaction chloride(in) = chloride(out). Functionally, pore-forming subunit of gustatory voltage-gated ion channels required for sensory perception of sweet, bitter and umami tastes. With CALHM1 forms a fast-activating voltage-gated ATP-release channel in type II taste bud cells, ATP acting as a neurotransmitter to activate afferent neural gustatory pathways. Acts both as a voltage-gated and calcium-activated ion channel: mediates neuronal excitability in response to membrane depolarization and low extracellular Ca(2+) concentration. Has poor ion selectivity and forms a wide pore (around 14 Angstroms) that mediates permeation of small ions including Ca(2+), Na(+), K(+) and Cl(-), as well as larger ions such as ATP(4-). The chain is Calcium homeostasis modulator protein 3 from Mus musculus (Mouse).